A 3462-amino-acid chain; its full sequence is Extracellular matrix-binding protein EbhA (3462 aa).

Positions 1-19 (MVQQSTTVAEAQGNEQKAN) are enriched in polar residues. The interval 1–21 (MVQQSTTVAEAQGNEQKANNV) is disordered. FIVAR domains follow at residues 24 to 82 (AMDK…INQA), 150 to 208 (AMGN…VEQA), 276 to 334 (AMTQ…ITAA), 402 to 460 (AMTQ…IQQA), 528 to 586 (AMTN…VEQA), 654 to 712 (AMTQ…VAQA), 780 to 838 (AMGT…VTQA), 906 to 964 (AMSN…ITRA), 1032 to 1093 (AMDQ…ITNE), 1158 to 1216 (AMEL…VNGA), 1284 to 1342 (AMGN…VEQA), 1410 to 1467 (AMHG…INQA), 1535 to 1593 (LMDA…VSSA), 1661 to 1719 (AMEA…VEQL), 1787 to 1845 (AMQA…VEQL), 1913 to 1971 (AMET…VDQV), 2039 to 2093 (SMDQ…VDQA), 2161 to 2220 (AMDQ…VIKL), and 2415 to 2471 (AMET…INGA). A helical transmembrane segment spans residues 3267–3289 (VIKNAIGVVGISGLLASFWFFIA). The segment at 3365 to 3462 (RRKEDEEDVE…KKKKAKKNKK (98 aa)) is disordered. Composition is skewed to basic and acidic residues over residues 3380-3390 (TDEKVLKDNEH) and 3429-3439 (QKDNQSKDKKS). Basic residues predominate over residues 3444-3462 (TSKKVAAKKKKKKAKKNKK).

It localises to the cell membrane. In Staphylococcus aureus (strain Newman), this protein is Extracellular matrix-binding protein EbhA (ebhA).